Here is an 872-residue protein sequence, read N- to C-terminus: Alanine--tRNA ligase (872 aa).

Positions 567, 571, 669, and 673 each coordinate Zn(2+).

Belongs to the class-II aminoacyl-tRNA synthetase family. The cofactor is Zn(2+).

Its subcellular location is the cytoplasm. The enzyme catalyses tRNA(Ala) + L-alanine + ATP = L-alanyl-tRNA(Ala) + AMP + diphosphate. Catalyzes the attachment of alanine to tRNA(Ala) in a two-step reaction: alanine is first activated by ATP to form Ala-AMP and then transferred to the acceptor end of tRNA(Ala). Also edits incorrectly charged Ser-tRNA(Ala) and Gly-tRNA(Ala) via its editing domain. The protein is Alanine--tRNA ligase of Streptococcus pyogenes serotype M28 (strain MGAS6180).